The following is a 171-amino-acid chain: Glucagon family neuropeptides (171 aa).

The N-terminal stretch at methionine 1–serine 22 is a signal peptide. Residues serine 23–glutamate 76 constitute a propeptide that is removed on maturation. The segment at valine 145 to leucine 153 is important for receptor binding. Lysine 164 is subject to Lysine amide. The propeptide occupies valine 168–leucine 171.

The protein belongs to the glucagon family.

The protein localises to the secreted. Its function is as follows. Primary role of GRF is to release GH from the pituitary. In terms of biological role, PACAP is a neuropeptide involved in diverse array of physiological processes through activating the PACAP subfamily of class B1 G protein-coupled receptors: VIP receptor 1 (VIPR1), VIP receptor 2 (VIPR2), and PACAP type I receptor (ADCYAP1R1). Exerts neuroprotective and general cytoprotective effects due to anti-apoptotic, anti-inflammatory, and antioxidant actions. This Pelophylax ridibundus (Marsh frog) protein is Glucagon family neuropeptides (adcyap1).